The primary structure comprises 609 residues: UvrABC system protein C (609 aa).

The region spanning 16–94 (SSPGVYRMYD…IKQYMPKYNV (79 aa)) is the GIY-YIG domain. One can recognise a UVR domain in the interval 203–238 (QQVTKALVAKMEQAAVELNYEQAARYRDQITALRRV).

This sequence belongs to the UvrC family. In terms of assembly, interacts with UvrB in an incision complex.

The protein resides in the cytoplasm. Its function is as follows. The UvrABC repair system catalyzes the recognition and processing of DNA lesions. UvrC both incises the 5' and 3' sides of the lesion. The N-terminal half is responsible for the 3' incision and the C-terminal half is responsible for the 5' incision. This chain is UvrABC system protein C, found in Shewanella piezotolerans (strain WP3 / JCM 13877).